The chain runs to 564 residues: Ribonuclease J (564 aa).

6 residues coordinate Zn(2+): His-85, His-87, Asp-89, His-90, His-153, and Asp-175. 375-379 (HVSGH) serves as a coordination point for substrate. Position 401 (His-401) interacts with Zn(2+).

It belongs to the metallo-beta-lactamase superfamily. RNA-metabolizing metallo-beta-lactamase-like family. Bacterial RNase J subfamily. As to quaternary structure, homodimer, may be a subunit of the RNA degradosome. Zn(2+) serves as cofactor.

It is found in the cytoplasm. Its function is as follows. An RNase that has 5'-3' exonuclease and possibly endonuclease activity. Plays a role in 16S and 23S rRNA processing. Might have a role in mRNA maturation and/or decay. The protein is Ribonuclease J of Sinorhizobium meliloti (strain Sm2011 / Rm2011 / 2011).